The sequence spans 363 residues: Probable dual-specificity RNA methyltransferase RlmN (363 aa).

Glutamate 99 acts as the Proton acceptor in catalysis. Residues 105–341 (SENRMTACVS…VTVRKSHGAS (237 aa)) enclose the Radical SAM core domain. Cysteines 112 and 346 form a disulfide. Residues cysteine 119, cysteine 123, and cysteine 126 each coordinate [4Fe-4S] cluster. Residues 171 to 172 (GE), serine 204, 227 to 229 (SLH), and asparagine 303 contribute to the S-adenosyl-L-methionine site. Catalysis depends on cysteine 346, which acts as the S-methylcysteine intermediate.

It belongs to the radical SAM superfamily. RlmN family. [4Fe-4S] cluster serves as cofactor.

It localises to the cytoplasm. It catalyses the reaction adenosine(2503) in 23S rRNA + 2 reduced [2Fe-2S]-[ferredoxin] + 2 S-adenosyl-L-methionine = 2-methyladenosine(2503) in 23S rRNA + 5'-deoxyadenosine + L-methionine + 2 oxidized [2Fe-2S]-[ferredoxin] + S-adenosyl-L-homocysteine. It carries out the reaction adenosine(37) in tRNA + 2 reduced [2Fe-2S]-[ferredoxin] + 2 S-adenosyl-L-methionine = 2-methyladenosine(37) in tRNA + 5'-deoxyadenosine + L-methionine + 2 oxidized [2Fe-2S]-[ferredoxin] + S-adenosyl-L-homocysteine. Specifically methylates position 2 of adenine 2503 in 23S rRNA and position 2 of adenine 37 in tRNAs. This is Probable dual-specificity RNA methyltransferase RlmN from Chlorobium phaeobacteroides (strain DSM 266 / SMG 266 / 2430).